Reading from the N-terminus, the 88-residue chain is Protein Aeq5-like1 (88 aa).

Positions 1–20 (MKSVIAVLVLSLVLVNFTQA) are cleaved as a signal peptide. 4 cysteine pairs are disulfide-bonded: C29–C68, C33–C64, C40–C56, and C47–C53.

In terms of tissue distribution, is expressed in the ectodermal cells of gastrulae and planulae. Is also noticeable in the endoderm in late planulae. In the primary polyps, is expressed in both ectoderm (sensory neurons) and endoderm (ganglions). Is not expressed in nematocytes.

Functionally, probable neuropeptide. This chain is Protein Aeq5-like1, found in Nematostella vectensis (Starlet sea anemone).